The chain runs to 218 residues: Elongation factor Ts (218 aa).

The interval 82–85 is involved in Mg(2+) ion dislocation from EF-Tu; it reads TDFV.

It belongs to the EF-Ts family.

Its subcellular location is the cytoplasm. Its function is as follows. Associates with the EF-Tu.GDP complex and induces the exchange of GDP to GTP. It remains bound to the aminoacyl-tRNA.EF-Tu.GTP complex up to the GTP hydrolysis stage on the ribosome. The protein is Elongation factor Ts of Prochlorococcus marinus (strain MIT 9215).